A 61-amino-acid polypeptide reads, in one-letter code: Photosystem II reaction center protein K (61 aa).

Residues 1–24 (MLNIFSLICICLHSTLYSSSFFLA) constitute a propeptide that is removed on maturation. A helical transmembrane segment spans residues 36–56 (IVDFMPVIPLLFFLLAFVWQA).

Belongs to the PsbK family. PSII is composed of 1 copy each of membrane proteins PsbA, PsbB, PsbC, PsbD, PsbE, PsbF, PsbH, PsbI, PsbJ, PsbK, PsbL, PsbM, PsbT, PsbX, PsbY, PsbZ, Psb30/Ycf12, at least 3 peripheral proteins of the oxygen-evolving complex and a large number of cofactors. It forms dimeric complexes.

The protein localises to the plastid. It is found in the chloroplast thylakoid membrane. Its function is as follows. One of the components of the core complex of photosystem II (PSII). PSII is a light-driven water:plastoquinone oxidoreductase that uses light energy to abstract electrons from H(2)O, generating O(2) and a proton gradient subsequently used for ATP formation. It consists of a core antenna complex that captures photons, and an electron transfer chain that converts photonic excitation into a charge separation. The chain is Photosystem II reaction center protein K from Eucalyptus globulus subsp. globulus (Tasmanian blue gum).